The following is a 575-amino-acid chain: MDPRGILKAFPKRKKIHADASSKVLAKIPRKEEGEEAEEWLSSLRAHVVRTGIGRARAELFEKQIVQHGGQLCPVQGPGVTHIVVDEGMDYERALRLLRLPRLPPGAQLVKSAWLSLCLQERRLVDVAGFSIFIPSKYLDQSQPSKAEQDASLPPGTHEALLQTALPPPPSPTRPVSPPQKTKEAPNTQAQPISDDEASDGEETQVSAADLEALISGHYPASLEGDCDPSPAPVVLDKWVCAQPSSQKATNHNLHITEKLEVLAKAYSVQGDKWRALGYAKAINALKSFHKPVTSYQEACSIPGIGKRMAEKIIEILESGHLRKLDHISESVPVLELFSNIWGAGTKTAQMWYQQGFRSLEDIRSQASLTTQQAIGLKHYNDFLERMPREEATEIEQTVQKAAQAFNSGLLCVACGSYRRGKATCGDVDVLITHPDGRSHRGIFSRLLDSLRQQGFLTDDLVSQEENGQQQKYLGVCRLPGPGWRHRRLDIIVVPYSEFACALLYFTGSAHFNRSMRALAKTKGMSLSEHALSTAVVRNTHGCKMGPGRVLPTPTEKDVFRLLGLPYREPAERDW.

Residues 36–132 form the BRCT domain; sequence EAEEWLSSLR…RLVDVAGFSI (97 aa). The disordered stretch occupies residues 160–205; that stretch reads ALLQTALPPPPSPTRPVSPPQKTKEAPNTQAQPISDDEASDGEETQ. Residues 166 to 178 show a composition bias toward pro residues; sequence LPPPPSPTRPVSP. Acidic residues predominate over residues 194 to 203; it reads SDDEASDGEE. The interval 265–279 is DNA-binding; the sequence is KAYSVQGDKWRALGY. Lys312 (schiff-base intermediate with DNA) is an active-site residue. Residues 345 to 348 are DNA-binding; it reads GTKT. Residues Arg386, 417–420, and 426–429 each bind dCTP; these read SYRR and GDVD. Residues 420–429 form an involved in primer binding region; the sequence is RGKATCGDVD. Mn(2+)-binding residues include Asp427, Asp429, and Asp490. The tract at residues 466–505 is DNA-binding; it reads ENGQQQKYLGVCRLPGPGWRHRRLDIIVVPYSEFACALLY. Asn513 lines the dCTP pocket.

The protein belongs to the DNA polymerase type-X family. Interacts with PCNA. Interacts with PAXX; promoting POLL recruitment to double-strand breaks (DSBs) and stimulation of the end-filling activity of POLL. Interacts with XRCC4; promoting POLL recruitment to double-strand breaks (DSBs) and stimulation of the end-filling activity of POLL. Interacts with NHEJ1/XLF; promoting POLL recruitment to double-strand breaks (DSBs) and stimulation of the end-filling activity of POLL. Mn(2+) serves as cofactor.

Its subcellular location is the nucleus. It catalyses the reaction DNA(n) + a 2'-deoxyribonucleoside 5'-triphosphate = DNA(n+1) + diphosphate. In terms of biological role, DNA polymerase that functions in several pathways of DNA repair. Involved in base excision repair (BER) responsible for repair of lesions that give rise to abasic (AP) sites in DNA. Also contributes to DNA double-strand break repair by non-homologous end joining and homologous recombination. Has both template-dependent and template-independent (terminal transferase) DNA polymerase activities. Also has a 5'-deoxyribose-5-phosphate lyase (dRP lyase) activity. In Macaca fascicularis (Crab-eating macaque), this protein is DNA polymerase lambda.